The chain runs to 135 residues: Small ribosomal subunit protein uS8 (135 aa).

This sequence belongs to the universal ribosomal protein uS8 family. Part of the 30S ribosomal subunit. Contacts proteins S5 and S12.

Its function is as follows. One of the primary rRNA binding proteins, it binds directly to 16S rRNA central domain where it helps coordinate assembly of the platform of the 30S subunit. The chain is Small ribosomal subunit protein uS8 from Cutibacterium acnes (strain DSM 16379 / KPA171202) (Propionibacterium acnes).